We begin with the raw amino-acid sequence, 126 residues long: Large ribosomal subunit protein bL17 (126 aa).

This sequence belongs to the bacterial ribosomal protein bL17 family. Part of the 50S ribosomal subunit. Contacts protein L32.

The chain is Large ribosomal subunit protein bL17 from Coxiella burnetii (strain CbuK_Q154) (Coxiella burnetii (strain Q154)).